Reading from the N-terminus, the 536-residue chain is DEAD-box ATP-dependent RNA helicase 41 (536 aa).

A compositionally biased stretch (basic and acidic residues) spans 1–10 (MEQEENHSAD). The interval 1–25 (MEQEENHSADHLSAQPGNGNELEES) is disordered. An HIT-type zinc finger spans residues 40–69 (GEPRCVICGRYGEYICDQTDDDICSVECKT). Residues 137 to 165 (MCFSSSGLPEKLVLNLEAAGYVMPTPVQM) carry the Q motif motif. One can recognise a Helicase ATP-binding domain in the interval 168–344 (IPSSICNRSL…NSLAKNAIHI (177 aa)). Position 181–188 (181–188 (ADTGSGKT)) interacts with ATP. A DEAD box motif is present at residues 293–296 (DEVD). The region spanning 355-518 (SVKQVVIWVE…PIPRELANSK (164 aa)) is the Helicase C-terminal domain.

It belongs to the DEAD box helicase family. DDX59 subfamily.

It carries out the reaction ATP + H2O = ADP + phosphate + H(+). This chain is DEAD-box ATP-dependent RNA helicase 41, found in Oryza sativa subsp. japonica (Rice).